Reading from the N-terminus, the 62-residue chain is Small EDRK-rich factor 1 (62 aa).

2 stretches are compositionally biased toward basic and acidic residues: residues 1 to 30 and 50 to 62; these read MARGNQRELARQKNMKKSQEISKGKRKEDS and AANERKSMQTREK. A disordered region spans residues 1 to 62; it reads MARGNQRELA…ERKSMQTREK (62 aa).

Belongs to the SERF family. Interacts with SNCA; this interaction promotes the aggregation of SNCA.

The protein localises to the cytoplasm. The protein resides in the cytosol. It is found in the nucleus. In terms of biological role, positive regulator of amyloid protein aggregation and proteotoxicity. Induces conformational changes in amyloid proteins, such as APP, HTT, and SNCA, driving them into compact formations preceding the formation of aggregates. The polypeptide is Small EDRK-rich factor 1 (SERF1) (Bos taurus (Bovine)).